A 337-amino-acid chain; its full sequence is Formamidase (337 aa).

The 244-residue stretch at 14–257 (VVIGLVQLQL…DEIITAEVRP (244 aa)) folds into the CN hydrolase domain. Catalysis depends on glutamate 60, which acts as the Proton acceptor. Lysine 129 functions as the Proton donor in the catalytic mechanism. Cysteine 162 functions as the Nucleophile in the catalytic mechanism.

This sequence belongs to the carbon-nitrogen hydrolase superfamily. Aliphatic amidase family.

The enzyme catalyses formamide + H2O = formate + NH4(+). Functionally, is an aliphatic amidase with a restricted substrate specificity, as it only hydrolyzes formamide. The chain is Formamidase from Bradyrhizobium diazoefficiens (strain JCM 10833 / BCRC 13528 / IAM 13628 / NBRC 14792 / USDA 110).